Here is a 277-residue protein sequence, read N- to C-terminus: Indole-3-glycerol phosphate synthase (277 aa).

Belongs to the TrpC family.

The catalysed reaction is 1-(2-carboxyphenylamino)-1-deoxy-D-ribulose 5-phosphate + H(+) = (1S,2R)-1-C-(indol-3-yl)glycerol 3-phosphate + CO2 + H2O. Its pathway is amino-acid biosynthesis; L-tryptophan biosynthesis; L-tryptophan from chorismate: step 4/5. This Pseudomonas putida (strain ATCC 47054 / DSM 6125 / CFBP 8728 / NCIMB 11950 / KT2440) protein is Indole-3-glycerol phosphate synthase.